The following is a 937-amino-acid chain: Putative diacylglycerol kinase K06A1.6 (937 aa).

Disordered stretches follow at residues 44–69 (PPRK…SSRA) and 106–145 (SNDS…STNN). The segment covering 116-129 (VSVSSESSWSSASD) has biased composition (low complexity). Residues 414 to 551 (GPSQPLLVFV…LDRWRIDVEP (138 aa)) form the DAGKc domain.

This sequence belongs to the eukaryotic diacylglycerol kinase family.

It catalyses the reaction a 1,2-diacyl-sn-glycerol + ATP = a 1,2-diacyl-sn-glycero-3-phosphate + ADP + H(+). In Caenorhabditis elegans, this protein is Putative diacylglycerol kinase K06A1.6 (dgk-5).